The primary structure comprises 200 residues: LexA repressor (200 aa).

Catalysis depends on for autocatalytic cleavage activity residues serine 121 and lysine 158.

It belongs to the peptidase S24 family. Homodimer.

It catalyses the reaction Hydrolysis of Ala-|-Gly bond in repressor LexA.. Binds a consensus sequence 5'-TGTTC-N(4)-GAACA-3'; some genes have a tandem consensus sequence and their binding is cooperative. Binds to the promoters of a number of genes, including lexA and splB. Represses a number of genes involved in the response to DNA damage (SOS response). The protein is LexA repressor of Opitutus terrae (strain DSM 11246 / JCM 15787 / PB90-1).